The chain runs to 616 residues: Dihydroxy-acid dehydratase (616 aa).

D81 serves as a coordination point for Mg(2+). Residue C122 participates in [2Fe-2S] cluster binding. Positions 123 and 124 each coordinate Mg(2+). K124 is modified (N6-carboxylysine). C195 provides a ligand contact to [2Fe-2S] cluster. E491 is a binding site for Mg(2+). The active-site Proton acceptor is S517.

It belongs to the IlvD/Edd family. In terms of assembly, homodimer. [2Fe-2S] cluster serves as cofactor. Requires Mg(2+) as cofactor.

It catalyses the reaction (2R)-2,3-dihydroxy-3-methylbutanoate = 3-methyl-2-oxobutanoate + H2O. The enzyme catalyses (2R,3R)-2,3-dihydroxy-3-methylpentanoate = (S)-3-methyl-2-oxopentanoate + H2O. Its pathway is amino-acid biosynthesis; L-isoleucine biosynthesis; L-isoleucine from 2-oxobutanoate: step 3/4. The protein operates within amino-acid biosynthesis; L-valine biosynthesis; L-valine from pyruvate: step 3/4. Functionally, functions in the biosynthesis of branched-chain amino acids. Catalyzes the dehydration of (2R,3R)-2,3-dihydroxy-3-methylpentanoate (2,3-dihydroxy-3-methylvalerate) into 2-oxo-3-methylpentanoate (2-oxo-3-methylvalerate) and of (2R)-2,3-dihydroxy-3-methylbutanoate (2,3-dihydroxyisovalerate) into 2-oxo-3-methylbutanoate (2-oxoisovalerate), the penultimate precursor to L-isoleucine and L-valine, respectively. The polypeptide is Dihydroxy-acid dehydratase (Escherichia coli (strain K12 / MC4100 / BW2952)).